The chain runs to 558 residues: N-acetylglucosamine-6-O-sulfatase (558 aa).

S101 is subject to 3-oxoalanine (Ser).

The protein belongs to the sulfatase family. Post-translationally, the conversion to 3-oxoalanine (also known as C-formylglycine, FGly), of a serine or cysteine residue in prokaryotes and of a cysteine residue in eukaryotes, is critical for catalytic activity.

Exosulfatase involved in the degradation of the glycosaminoglycan (GAG) heparan sulfate (HS). Catalyzes the hydrolysis of the 6-sulfate groups of the N-acetyl-D-glucosamine 6-sulfate units. GAG-specific sulfatases play a key role in the persistence of the major human gut symbiont B.thetaiotaomicron in the host gastrointestinal tract. This Bacteroides thetaiotaomicron (strain ATCC 29148 / DSM 2079 / JCM 5827 / CCUG 10774 / NCTC 10582 / VPI-5482 / E50) protein is N-acetylglucosamine-6-O-sulfatase.